The chain runs to 24 residues: Heptapoietin A light chain (24 aa).

In terms of assembly, heterodimer of a heavy and a light chain linked by disulfide bond(s).

Its function is as follows. HPTA is an acidic heparin-binding growth factor for hepatocytes. The polypeptide is Heptapoietin A light chain (Oryctolagus cuniculus (Rabbit)).